A 427-amino-acid chain; its full sequence is UDP-N-acetylglucosamine 1-carboxyvinyltransferase 1 (427 aa).

Residue 23 to 24 participates in phosphoenolpyruvate binding; it reads KN. Arg96 provides a ligand contact to UDP-N-acetyl-alpha-D-glucosamine. The Proton donor role is filled by Cys120. At Cys120 the chain carries 2-(S-cysteinyl)pyruvic acid O-phosphothioketal. UDP-N-acetyl-alpha-D-glucosamine is bound by residues 125–129, Asp309, and Val331; that span reads RPIDL.

Belongs to the EPSP synthase family. MurA subfamily.

The protein resides in the cytoplasm. The enzyme catalyses phosphoenolpyruvate + UDP-N-acetyl-alpha-D-glucosamine = UDP-N-acetyl-3-O-(1-carboxyvinyl)-alpha-D-glucosamine + phosphate. It functions in the pathway cell wall biogenesis; peptidoglycan biosynthesis. Cell wall formation. Adds enolpyruvyl to UDP-N-acetylglucosamine. This is UDP-N-acetylglucosamine 1-carboxyvinyltransferase 1 from Streptococcus pneumoniae serotype 4 (strain ATCC BAA-334 / TIGR4).